Consider the following 75-residue polypeptide: UPF0270 protein PFLU_4323 (75 aa).

It belongs to the UPF0270 family.

This chain is UPF0270 protein PFLU_4323, found in Pseudomonas fluorescens (strain SBW25).